The primary structure comprises 296 residues: Arginine/serine-rich protein 1 (296 aa).

A disordered region spans residues 1–131 (MSNYVNDMWP…RSRSRSRERS (131 aa)). Ser-12 carries the post-translational modification Phosphoserine. The span at 20–31 (SASRSGGSSRLS) shows a compositional bias: low complexity. Over residues 32 to 125 (SRSRSRSFSR…RSRSRSRSRS (94 aa)) the composition is skewed to basic residues. 2 positions are modified to phosphoserine: Ser-111 and Ser-113. Position 141 is an omega-N-methylarginine (Arg-141). Residues 156–165 (ERSRWRDRSR) show a composition bias toward basic and acidic residues. Disordered stretches follow at residues 156 to 175 (ERSR…TPFR) and 217 to 296 (SHGI…WIPV). Residues 245 to 261 (EKPSQQRSIAFSSNNSV) show a composition bias toward polar residues. The span at 272-287 (ATEETSSRSPKIDKKK) shows a compositional bias: basic and acidic residues. Ser-280 carries the phosphoserine modification.

It belongs to the RSRP family. Phosphorylated. Phosphorylation at Ser-111 and Ser-113 mediates the interaction with spliceosome proteins.

It localises to the nucleus. Probably acts as a spliceosomal factor that contributes to spliceosome assembly and regulates the isoform switching of proteins such as PARP6. This chain is Arginine/serine-rich protein 1 (RSRP1), found in Macaca fascicularis (Crab-eating macaque).